A 365-amino-acid polypeptide reads, in one-letter code: Alanine racemase (365 aa).

K32 (proton acceptor; specific for D-alanine) is an active-site residue. K32 bears the N6-(pyridoxal phosphate)lysine mark. R128 is a substrate binding site. Catalysis depends on Y257, which acts as the Proton acceptor; specific for L-alanine. M305 contacts substrate.

It belongs to the alanine racemase family. Requires pyridoxal 5'-phosphate as cofactor.

It carries out the reaction L-alanine = D-alanine. The protein operates within amino-acid biosynthesis; D-alanine biosynthesis; D-alanine from L-alanine: step 1/1. Functionally, catalyzes the interconversion of L-alanine and D-alanine. May also act on other amino acids. The chain is Alanine racemase (alr) from Francisella tularensis subsp. tularensis (strain WY96-3418).